The sequence spans 2073 residues: Non-reducing polyketide synthase cla3 (2073 aa).

Residues 9 to 242 (LLFGDYTEPW…EKLNIHALQH (234 aa)) form an N-terminal acylcarrier protein transacylase domain (SAT) region. One can recognise a Ketosynthase family 3 (KS3) domain in the interval 363–793 (SGRIAIVGMS…GGNGCLLLEE (431 aa)). Residues Cys-538, His-673, and His-712 each act as for beta-ketoacyl synthase activity in the active site. The segment at 898 to 1198 (TFTGQGSQYA…KIMSTLDATG (301 aa)) is malonyl-CoA:ACP transacylase (MAT) domain. The active-site For acyl/malonyl transferase activity is Ser-987. The product template (PT) domain stretch occupies residues 1276 to 1590 (STCAQYVITE…QNVILERLLG (315 aa)). The interval 1279–1420 (AQYVITETKT…AGLESQWEKS (142 aa)) is N-terminal hotdog fold. In terms of domain architecture, PKS/mFAS DH spans 1279–1586 (AQYVITETKT…FHRVQNVILE (308 aa)). His-1311 functions as the Proton acceptor; for dehydratase activity in the catalytic mechanism. The tract at residues 1439-1586 (QGHRIQRDIY…FHRVQNVILE (148 aa)) is C-terminal hotdog fold. Catalysis depends on Asp-1500, which acts as the Proton donor; for dehydratase activity. Residues 1594 to 1637 (SSSVPAQASDPLRSKRSPQEARSLPGEAKTEKPGSTIATTSPVL) are disordered. In terms of domain architecture, Carrier spans 1641–1718 (KSEQGMFQAL…NLRCAFDEDV (78 aa)). An O-(pantetheine 4'-phosphoryl)serine modification is found at Ser-1678. The span at 1721-1738 (EFTDSEVTSGTPNSSESV) shows a compositional bias: polar residues. Residues 1721 to 1786 (EFTDSEVTSG…GVLDDGSPQP (66 aa)) are disordered. Basic and acidic residues predominate over residues 1747-1774 (PEEHAFKEPKDDSPLARRDMDNSNDRSL). The segment at 1805 to 1950 (FLIADGSGSI…MQQHLRAIFK (146 aa)) is thioesterase (TE) domain. His-2058 acts as the For thioesterase activity in catalysis.

The protein operates within secondary metabolite biosynthesis. In terms of biological role, highly reducing polyketide synthase; part of the gene cluster that mediates the biosynthesis of cladosporin, a tricyclic octaketide that acts as an antimalarial agent though inhibition of the Plasmodium falciparum lysyl-tRNA synthetase. The highly reducing polyketide synthase cla2 is responsible for biosynthesis up to the pentaketide stage, including of the tetrahydropyran (THP) ring, whereas the three subsequent ketide extensions with no reduction are catalyzed by the non-reducing polyketide synthase cla3. The chain is Non-reducing polyketide synthase cla3 from Cladosporium cladosporioides.